Here is a 380-residue protein sequence, read N- to C-terminus: Magnesium-protoporphyrin IX monomethyl ester [oxidative] cyclase 1 (380 aa).

Belongs to the AcsF family. Fe cation serves as cofactor.

The enzyme catalyses Mg-protoporphyrin IX 13-monomethyl ester + 3 NADPH + 3 O2 + 2 H(+) = 3,8-divinyl protochlorophyllide a + 3 NADP(+) + 5 H2O. Its pathway is porphyrin-containing compound metabolism; chlorophyll biosynthesis (light-independent). In terms of biological role, catalyzes the formation of the isocyclic ring in chlorophyll biosynthesis. Mediates the cyclase reaction, which results in the formation of divinylprotochlorophyllide (Pchlide) characteristic of all chlorophylls from magnesium-protoporphyrin IX 13-monomethyl ester (MgPMME). The sequence is that of Magnesium-protoporphyrin IX monomethyl ester [oxidative] cyclase 1 from Thermosynechococcus vestitus (strain NIES-2133 / IAM M-273 / BP-1).